A 109-amino-acid polypeptide reads, in one-letter code: Large ribosomal subunit protein uL22 (109 aa).

Belongs to the universal ribosomal protein uL22 family. Part of the 50S ribosomal subunit.

In terms of biological role, this protein binds specifically to 23S rRNA; its binding is stimulated by other ribosomal proteins, e.g. L4, L17, and L20. It is important during the early stages of 50S assembly. It makes multiple contacts with different domains of the 23S rRNA in the assembled 50S subunit and ribosome. Functionally, the globular domain of the protein is located near the polypeptide exit tunnel on the outside of the subunit, while an extended beta-hairpin is found that lines the wall of the exit tunnel in the center of the 70S ribosome. This Bordetella petrii (strain ATCC BAA-461 / DSM 12804 / CCUG 43448) protein is Large ribosomal subunit protein uL22.